The chain runs to 402 residues: Phosphoglycerate kinase (402 aa).

Residues 21 to 23 (DFN), arginine 36, 59 to 62 (HLGR), arginine 118, and arginine 151 contribute to the substrate site. ATP is bound by residues lysine 201, glycine 293, glutamate 324, and 353 to 356 (GGDS).

The protein belongs to the phosphoglycerate kinase family. Monomer.

It is found in the cytoplasm. It carries out the reaction (2R)-3-phosphoglycerate + ATP = (2R)-3-phospho-glyceroyl phosphate + ADP. The protein operates within carbohydrate degradation; glycolysis; pyruvate from D-glyceraldehyde 3-phosphate: step 2/5. The chain is Phosphoglycerate kinase from Thermosipho africanus (strain TCF52B).